Reading from the N-terminus, the 151-residue chain is Large-conductance mechanosensitive channel (151 aa).

Helical transmembrane passes span 19-39 and 85-105; these read VGII…GDVL and GLFI…FFLV.

The protein belongs to the MscL family. Homopentamer.

The protein resides in the cell inner membrane. Its function is as follows. Channel that opens in response to stretch forces in the membrane lipid bilayer. May participate in the regulation of osmotic pressure changes within the cell. This chain is Large-conductance mechanosensitive channel, found in Chlorobaculum parvum (strain DSM 263 / NCIMB 8327) (Chlorobium vibrioforme subsp. thiosulfatophilum).